A 372-amino-acid polypeptide reads, in one-letter code: Dual-specificity RNA methyltransferase RlmN (372 aa).

Glutamate 94 acts as the Proton acceptor in catalysis. The region spanning 100-339 (DGDRATLCVS…VTIRKTRGDD (240 aa)) is the Radical SAM core domain. Cysteine 107 and cysteine 344 are disulfide-bonded. The [4Fe-4S] cluster site is built by cysteine 114, cysteine 118, and cysteine 121. Residues 168 to 169 (GE), serine 200, 222 to 224 (SLH), and asparagine 301 each bind S-adenosyl-L-methionine. Catalysis depends on cysteine 344, which acts as the S-methylcysteine intermediate.

Belongs to the radical SAM superfamily. RlmN family. Requires [4Fe-4S] cluster as cofactor.

The protein resides in the cytoplasm. The catalysed reaction is adenosine(2503) in 23S rRNA + 2 reduced [2Fe-2S]-[ferredoxin] + 2 S-adenosyl-L-methionine = 2-methyladenosine(2503) in 23S rRNA + 5'-deoxyadenosine + L-methionine + 2 oxidized [2Fe-2S]-[ferredoxin] + S-adenosyl-L-homocysteine. It catalyses the reaction adenosine(37) in tRNA + 2 reduced [2Fe-2S]-[ferredoxin] + 2 S-adenosyl-L-methionine = 2-methyladenosine(37) in tRNA + 5'-deoxyadenosine + L-methionine + 2 oxidized [2Fe-2S]-[ferredoxin] + S-adenosyl-L-homocysteine. Functionally, specifically methylates position 2 of adenine 2503 in 23S rRNA and position 2 of adenine 37 in tRNAs. m2A2503 modification seems to play a crucial role in the proofreading step occurring at the peptidyl transferase center and thus would serve to optimize ribosomal fidelity. This chain is Dual-specificity RNA methyltransferase RlmN, found in Aliivibrio fischeri (strain ATCC 700601 / ES114) (Vibrio fischeri).